Here is a 167-residue protein sequence, read N- to C-terminus: Translationally-controlled tumor protein homolog (167 aa).

The region spanning M1–I167 is the TCTP domain.

This sequence belongs to the TCTP family.

It is found in the cytoplasm. The protein localises to the cytoskeleton. Functionally, involved in protein synthesis. Involved in microtubule stabilization. The polypeptide is Translationally-controlled tumor protein homolog (Kluyveromyces lactis (strain ATCC 8585 / CBS 2359 / DSM 70799 / NBRC 1267 / NRRL Y-1140 / WM37) (Yeast)).